Consider the following 382-residue polypeptide: Intermediate transcription factor 3 large subunit (382 aa).

Belongs to the poxviruses A23 family. As to quaternary structure, heterodimer of a 45 kDa and a 32 kDa subunit.

In terms of biological role, acts with RNA polymerase to initiate transcription from intermediate gene promoters. The chain is Intermediate transcription factor 3 large subunit (VITF3L) from Camelus.